Consider the following 1055-residue polypeptide: RapA guanosine triphosphatase-activating protein 1 (1055 aa).

Disordered stretches follow at residues 76 to 100 (LSPQ…EEER), 256 to 292 (NHQP…SSLT), 418 to 525 (QQLL…FLGV), 544 to 570 (THAT…SPPL), 603 to 629 (TTQL…PPSE), and 943 to 969 (NNNS…NLPT). The span at 89–100 (QHEKITPEEEER) shows a compositional bias: basic and acidic residues. Low complexity-rich tracts occupy residues 262–292 (STPR…SSLT), 442–455 (DFNL…NNNN), and 469–482 (TTTT…NNNN). The span at 483-494 (ISPQHSGTSGSP) shows a compositional bias: polar residues. Composition is skewed to low complexity over residues 603–622 (TTQL…TSQP) and 943–966 (NNNS…SDSN). In terms of domain architecture, Rap-GAP spans 779 to 1048 (LIQFEAKNIH…RTRKEFLHSF (270 aa)).

It localises to the cytoplasm. The protein localises to the cell cortex. Functionally, mediates the deactivation of rap1 and plays an important role in spatially and temporally regulating cell adhesion and chemotaxis by controlling attachment disassembly in the leading edge through the regulation of myosin II assembly and disassembly. Overexpression leads to defective chemotaxis. The chain is RapA guanosine triphosphatase-activating protein 1 (rapgap1) from Dictyostelium discoideum (Social amoeba).